A 166-amino-acid polypeptide reads, in one-letter code: Lipoprotein signal peptidase (166 aa).

4 helical membrane passes run 10 to 30 (GGALAPWLGISLIVILFDQLT), 32 to 52 (IAVLKTFAYGAMHALTPFFNL), 71 to 91 (WQRWAFTALGIGATLVICYLL), and 100 to 120 (FSLSLALILGGALGNVIDRLI). Catalysis depends on residues aspartate 126 and aspartate 144. Residues 135-155 (WHWPAFNLADSAITVGAVLLI) form a helical membrane-spanning segment.

Belongs to the peptidase A8 family.

It is found in the cell inner membrane. The enzyme catalyses Release of signal peptides from bacterial membrane prolipoproteins. Hydrolyzes -Xaa-Yaa-Zaa-|-(S,diacylglyceryl)Cys-, in which Xaa is hydrophobic (preferably Leu), and Yaa (Ala or Ser) and Zaa (Gly or Ala) have small, neutral side chains.. Its pathway is protein modification; lipoprotein biosynthesis (signal peptide cleavage). This protein specifically catalyzes the removal of signal peptides from prolipoproteins. The polypeptide is Lipoprotein signal peptidase (Burkholderia mallei (strain ATCC 23344)).